Here is a 400-residue protein sequence, read N- to C-terminus: Large envelope protein (400 aa).

Methionine 1 is subject to N-acetylmethionine. Disordered regions lie at residues 1 to 42 (MGGY…NNPD) and 84 to 118 (ILTT…SHPQ). Glycine 2 carries the N-myristoyl glycine; by host lipid modification. The pre-S1 stretch occupies residues 2 to 119 (GGYSSKPRKG…PPLRDSHPQA (118 aa)). A pre-S region spans residues 2 to 174 (GGYSSKPRKG…FSRTGDPVPK (173 aa)). The Virion surface; in external conformation segment spans residues 2-181 (GGYSSKPRKG…VPKMENTTSG (180 aa)). The Intravirion; in internal conformation portion of the chain corresponds to 2–253 (GGYSSKPRKG…PGYRWMCLRR (252 aa)). Residue tyrosine 4 is glycosylated (N-linked (GlcNAc...) asparagine). The tract at residues 120–174 (MQWNSTTFHQALLDPRVRGLYFPAGGSSSGTANPVPTTASPISSIFSRTGDPVPK) is pre-S2. A helical transmembrane segment spans residues 182 to 202 (FLGPLLVLQAGFFLLTRILTI). Residues 203 to 253 (PQSLDSWWTSLNFLGGAPACPGQNSQSPTSNHSPTSCPPICPGYRWMCLRR) are Intravirion; in external conformation-facing. Residues 254 to 274 (FIIFLFILLLCLIFLLVLLDY) form a helical membrane-spanning segment. Over 275–348 (QGMLPVCPLI…WASVRFSWLS (74 aa)) the chain is Virion surface. The N-linked (GlcNAc...) asparagine; by host glycan is linked to asparagine 320. Residues 349 to 369 (LLAPFVQWFVGLSPTVWLSVI) traverse the membrane as a helical segment. The Intravirion portion of the chain corresponds to 370–375 (WMMWYW). The helical transmembrane segment at 376–398 (GPSLYNILSPFLPLLPIFFCLWV) threads the bilayer. Residues 399–400 (YI) are Virion surface-facing.

It belongs to the orthohepadnavirus major surface antigen family. As to quaternary structure, in its internal form (Li-HBsAg), interacts with the capsid protein and with the isoform S. Interacts with host chaperone CANX. Associates with host chaperone CANX through its pre-S2 N glycan; this association may be essential for isoform M proper secretion. In terms of assembly, interacts with isoform L. Interacts with the antigens of satellite virus HDV (HDVAgs); this interaction is required for encapsidation of HDV genomic RNA. Isoform M is N-terminally acetylated by host at a ratio of 90%, and N-glycosylated by host at the pre-S2 region. In terms of processing, myristoylated.

The protein resides in the virion membrane. The large envelope protein exists in two topological conformations, one which is termed 'external' or Le-HBsAg and the other 'internal' or Li-HBsAg. In its external conformation the protein attaches the virus to cell receptors and thereby initiating infection. This interaction determines the species specificity and liver tropism. This attachment induces virion internalization predominantly through caveolin-mediated endocytosis. The large envelope protein also assures fusion between virion membrane and endosomal membrane. In its internal conformation the protein plays a role in virion morphogenesis and mediates the contact with the nucleocapsid like a matrix protein. In terms of biological role, the middle envelope protein plays an important role in the budding of the virion. It is involved in the induction of budding in a nucleocapsid independent way. In this process the majority of envelope proteins bud to form subviral lipoprotein particles of 22 nm of diameter that do not contain a nucleocapsid. This chain is Large envelope protein, found in Homo sapiens (Human).